Here is a 505-residue protein sequence, read N- to C-terminus: Exodeoxyribonuclease 7 large subunit (505 aa).

The interval 466–505 (SGDRDAVIDGEGGPAPAPTAPAPKPRPKPAAPPAGQGDLF) is disordered. The segment covering 480–497 (APAPTAPAPKPRPKPAAP) has biased composition (pro residues).

Belongs to the XseA family. Heterooligomer composed of large and small subunits.

Its subcellular location is the cytoplasm. The catalysed reaction is Exonucleolytic cleavage in either 5'- to 3'- or 3'- to 5'-direction to yield nucleoside 5'-phosphates.. Functionally, bidirectionally degrades single-stranded DNA into large acid-insoluble oligonucleotides, which are then degraded further into small acid-soluble oligonucleotides. The chain is Exodeoxyribonuclease 7 large subunit from Caulobacter vibrioides (strain NA1000 / CB15N) (Caulobacter crescentus).